The primary structure comprises 1026 residues: Lon protease homolog, mitochondrial (1026 aa).

A mitochondrion-targeting transit peptide spans 1 to 29 (MLGTRVTRAVYTRAPLKLQLRALGLHRRY). Disordered regions lie at residues 29–55 (YVHN…DKKL) and 185–206 (ASEE…DKVS). The Lon N-terminal domain maps to 62–345 (MLALPISRRP…KSLLVLKKEL (284 aa)). Residues 185 to 194 (ASEETKDEET) are compositionally biased toward acidic residues. Positions 195-206 (VDKTESATDKVS) are enriched in basic and acidic residues. 497-504 (GPPGVGKT) contributes to the ATP binding site. A disordered region spans residues 711-785 (TEPLVSTSEE…EEEEDTSMIV (75 aa)). Polar residues predominate over residues 714-737 (LVSTSEEPQLSQTNQNISSSSAED). Residues 815–1001 (TTPPGVIMGL…DDIYKRLFSG (187 aa)) form the Lon proteolytic domain. Active-site residues include Ser907 and Lys950.

It belongs to the peptidase S16 family. Homohexamer or homoheptamer. Organized in a ring with a central cavity.

The protein resides in the mitochondrion matrix. The catalysed reaction is Hydrolysis of proteins in presence of ATP.. In terms of biological role, ATP-dependent serine protease that mediates the selective degradation of misfolded, unassembled or oxidatively damaged polypeptides as well as certain short-lived regulatory proteins in the mitochondrial matrix. May also have a chaperone function in the assembly of inner membrane protein complexes. Participates in the regulation of mitochondrial gene expression and in the maintenance of the integrity of the mitochondrial genome. Binds to mitochondrial DNA in a site-specific manner. The chain is Lon protease homolog, mitochondrial from Candida glabrata (strain ATCC 2001 / BCRC 20586 / JCM 3761 / NBRC 0622 / NRRL Y-65 / CBS 138) (Yeast).